Consider the following 592-residue polypeptide: Outer spore wall assembly protein SHE10 (592 aa).

An N-terminal signal peptide occupies residues 1 to 23 (MRFFKRFLLTLTVFIYTLRYLHC). Coiled coils occupy residues 354–385 (ENNI…LYEE) and 448–583 (LNQF…KQMG). Over residues 507–580 (QSEQEERIKS…EVRKQEEARK (74 aa)) the composition is skewed to basic and acidic residues. The tract at residues 507–592 (QSEQEERIKS…GSPPPPQQQQ (86 aa)) is disordered.

It belongs to the SHE10 family. Component of the mitochondria-localized RNase mitochondrial RNA-processing (RNase MRP) composed of one single RNA encoded by the NME1 gene and at least 31 proteins. Absent in the nucleus-localized RNase MRP (NuMRP).

The protein resides in the mitochondrion. In terms of biological role, involved in spore wall assembly. May be a component of the mitochondrial RNase MRP (MtMRP), a ribonucleoprotein endoribonuclease involved in the cleaving RNA transcripts to generate primers for DNA replication in mitochondria. The sequence is that of Outer spore wall assembly protein SHE10 from Vanderwaltozyma polyspora (strain ATCC 22028 / DSM 70294 / BCRC 21397 / CBS 2163 / NBRC 10782 / NRRL Y-8283 / UCD 57-17) (Kluyveromyces polysporus).